A 126-amino-acid chain; its full sequence is Aspartate 1-decarboxylase (126 aa).

Catalysis depends on Ser25, which acts as the Schiff-base intermediate with substrate; via pyruvic acid. Ser25 carries the pyruvic acid (Ser) modification. Thr57 serves as a coordination point for substrate. The Proton donor role is filled by Tyr58. A substrate-binding site is contributed by Gly72–Ala74.

It belongs to the PanD family. As to quaternary structure, heterooctamer of four alpha and four beta subunits. Pyruvate serves as cofactor. Is synthesized initially as an inactive proenzyme, which is activated by self-cleavage at a specific serine bond to produce a beta-subunit with a hydroxyl group at its C-terminus and an alpha-subunit with a pyruvoyl group at its N-terminus.

The protein localises to the cytoplasm. The catalysed reaction is L-aspartate + H(+) = beta-alanine + CO2. It participates in cofactor biosynthesis; (R)-pantothenate biosynthesis; beta-alanine from L-aspartate: step 1/1. Catalyzes the pyruvoyl-dependent decarboxylation of aspartate to produce beta-alanine. This is Aspartate 1-decarboxylase from Campylobacter jejuni subsp. jejuni serotype O:23/36 (strain 81-176).